A 428-amino-acid polypeptide reads, in one-letter code: Sporulation kinase B (428 aa).

The Cytoplasmic portion of the chain corresponds to Met-1 to Asp-6. The chain crosses the membrane as a helical span at residues Tyr-7 to Gly-27. At Lys-28–Asn-37 the chain is on the extracellular side. Residues Ser-38–His-58 traverse the membrane as a helical segment. The Cytoplasmic portion of the chain corresponds to Glu-59 to Gln-68. A helical transmembrane segment spans residues Met-69 to Ala-89. At Ser-90–Tyr-99 the chain is on the extracellular side. A helical transmembrane segment spans residues Glu-100–Phe-120. The Cytoplasmic segment spans residues Gln-121–Lys-132. The chain crosses the membrane as a helical span at residues Leu-133–Ile-153. Residues Leu-154–Gly-166 are Extracellular-facing. Residues Ile-167 to Ile-187 traverse the membrane as a helical segment. Residues Tyr-188–His-428 are Cytoplasmic-facing. Residues Ser-218–Leu-426 enclose the Histidine kinase domain. Phosphohistidine; by autocatalysis is present on His-221.

It localises to the cell membrane. The catalysed reaction is ATP + protein L-histidine = ADP + protein N-phospho-L-histidine.. Functionally, phosphorylates the sporulation-regulatory proteins spo0A and spo0F. Spo0F is required for the KinB activity. In Bacillus subtilis (strain 168), this protein is Sporulation kinase B (kinB).